The sequence spans 245 residues: MIIPAIDLIDGNVVRLYQGDYGQQTTFDLSPLAQLQSYEARGAKWLHIVDLTGAKDPAKRQTRLISELVAGLNANIQVGGGIRTEEQVTELLAIGVKRVVIGSLAVKEPELVKQWFIKYGSEAICLALDVNINQSGEKMVAVSGWQSGGGKSLESLVETFSAVGLKHALVTDISRDGTLTGANTALYQEIAASFPNIAWQASGGIATLEDVAAVRDSGAAGIIIGKALLINQFNVAEAIQCWPND.

The Proton acceptor role is filled by aspartate 7. The active-site Proton donor is aspartate 129.

The protein belongs to the HisA/HisF family.

The protein resides in the cytoplasm. It carries out the reaction 1-(5-phospho-beta-D-ribosyl)-5-[(5-phospho-beta-D-ribosylamino)methylideneamino]imidazole-4-carboxamide = 5-[(5-phospho-1-deoxy-D-ribulos-1-ylimino)methylamino]-1-(5-phospho-beta-D-ribosyl)imidazole-4-carboxamide. It functions in the pathway amino-acid biosynthesis; L-histidine biosynthesis; L-histidine from 5-phospho-alpha-D-ribose 1-diphosphate: step 4/9. This is 1-(5-phosphoribosyl)-5-[(5-phosphoribosylamino)methylideneamino] imidazole-4-carboxamide isomerase from Shewanella sp. (strain W3-18-1).